The following is a 644-amino-acid chain: Leucine-rich repeat protein soc-2 homolog (644 aa).

A compositionally biased stretch (low complexity) spans 1–19 (MNLCSSGATASTTSLSSTG). Disordered stretches follow at residues 1-60 (MNLC…APTL) and 82-150 (NSPA…IQAD). Gly residues-rich tracts occupy residues 26–50 (GVPGGGAEGGGGDGGSGNSGGGGKA) and 87–96 (GAGGASGFTG). Residues 99-117 (QQPTGSNGHSHLHNENNAN) are compositionally biased toward polar residues. 20 LRR repeats span residues 164 to 185 (GIKRLDLSKSSITVIPSTVKEC), 187 to 208 (HLTELYLYSNKIGQLPPEIGCL), 210 to 231 (SLRNLALNENSLTSLPESLQNC), 233 to 254 (QLKVLDLRHNKLAEIPPVIYRL), 256 to 277 (SLTTLYLRFNRITAVADDLRQL), 279 to 300 (NLTMLSLRENKIRELGSAIGAL), 302 to 323 (NLTTLDVSHNHLEHLPEDIGNC), 325 to 346 (NLSALDLQHNELLDIPDSIGNL), 348 to 370 (SLVRLGMRYNRLNSVPATLKNCK), 371 to 392 (SMDEFNVEGNGITQLPDGMLAS), 395 to 416 (GLTTITLSRNQFASYPTGGPAQ), 419 to 440 (NVYSINLEHNRIDKIPYGIFSR), 443 to 464 (GLTKLNMKENMLTALPLDIGTW), 466 to 487 (NMVELNLATNALQKLPDDIMNL), 489 to 510 (NLEILILSNNMLKKIPNTIGNL), 512 to 533 (RLRILDLEENRIEVLPHEIGLL), 535 to 556 (ELQRLILQTNQITMLPRSIGHL), 558 to 579 (NLTHLSVSENNLQFLPEEIGSL), 581 to 603 (SLENLYINQNPGLEKLPFELALC), and 605 to 626 (NLKYLNIDKCPLSTIPPEIQAG).

It belongs to the SHOC2 family.

In terms of biological role, acts as a Ras effector and participates in MAPK pathway activation. Probably acts as a regulatory subunit of protein phosphatase that specifically dephosphorylates Raf kinase and stimulate Raf activity at specialized signaling complexes upon Ras activation. The chain is Leucine-rich repeat protein soc-2 homolog (Sur-8) from Drosophila erecta (Fruit fly).